Reading from the N-terminus, the 156-residue chain is Ribonuclease H (156 aa).

One can recognise an RNase H type-1 domain in the interval 1-142; the sequence is MGKQVEIFTD…CDELARAAAN (142 aa). Residues aspartate 10, glutamate 48, aspartate 70, and aspartate 134 each contribute to the Mg(2+) site.

This sequence belongs to the RNase H family. Monomer. The cofactor is Mg(2+).

It is found in the cytoplasm. The enzyme catalyses Endonucleolytic cleavage to 5'-phosphomonoester.. Functionally, endonuclease that specifically degrades the RNA of RNA-DNA hybrids. In Photorhabdus laumondii subsp. laumondii (strain DSM 15139 / CIP 105565 / TT01) (Photorhabdus luminescens subsp. laumondii), this protein is Ribonuclease H.